A 362-amino-acid polypeptide reads, in one-letter code: Caveolae-associated protein 4 (362 aa).

Residues 1–24 form a disordered region; sequence MEHNGSASNAGKIHQNRLSSVTED. Residues 100 to 120 adopt a coiled-coil conformation; that stretch reads IKDVKARVEKQQVRVTKVETK. Phosphoserine is present on residues S152, S171, and S172. Basic and acidic residues-rich tracts occupy residues 230 to 255, 275 to 289, and 305 to 320; these read RERL…ERFK, KAKD…VDRG, and HEFH…KEVT. 2 disordered regions span residues 230–289 and 305–346; these read RERL…VDRG and HEFH…KPQV. At Y324 the chain carries Phosphotyrosine. T334 is modified (phosphothreonine). S353 is subject to Phosphoserine.

This sequence belongs to the CAVIN family. As to quaternary structure, component of the CAVIN complex composed of CAVIN1, CAVIN2, CAVIN3 and CAVIN4. Interacts with CAVIN1. Interacts with CAVIN2; this augments the transactivation of NPPA. Interacts with CAV3, ADRA1A, ADRA1B, MAPK1 and MAPK3. In terms of tissue distribution, abundantly expressed in cardiac and skeletal muscle (at protein level). Weaker expression in aorta and lung. In heart, expressed in cardiomyocytes and vascular smooth muscle cells but not in other surrounding cells including vascular endothelial cells.

It is found in the cytoplasm. The protein localises to the myofibril. It localises to the sarcomere. The protein resides in the cytosol. Its subcellular location is the membrane. It is found in the caveola. The protein localises to the cell membrane. It localises to the sarcolemma. In terms of biological role, modulates the morphology of formed caveolae in cardiomyocytes, but is not required for caveolar formation. Facilitates the recruitment of MAPK1/3 to caveolae within cardiomyocytes and regulates alpha-1 adrenergic receptor-induced hypertrophic responses in cardiomyocytes through MAPK1/3 activation. Contributes to proper membrane localization and stabilization of caveolin-3 (CAV3) in cardiomyocytes. Induces RHOA activation and activates NPPA transcription and myofibrillar organization through the Rho/ROCK signaling pathway. The polypeptide is Caveolae-associated protein 4 (Cavin4) (Mus musculus (Mouse)).